We begin with the raw amino-acid sequence, 212 residues long: MIIAIDGPAASGKGTLGKRLAAHYGFRHLDTGVIYRAVAKALLDGGADLTDEARAVAAARKLDPGIFGDPALKSQTVGDAASVISAYAPLREALVSFQRQFAADPPGAVLDGRDIGTVICPDADVKIFVIADPVVRARRRTLEALARGEAADEARVLADILKRDERDRNRSAAPLTQAPDAVLLDNSNLDIEGGVRAAIDIVEAVRAGRRRV.

7–15 is a binding site for ATP; sequence GPAASGKGT.

It belongs to the cytidylate kinase family. Type 1 subfamily.

The protein localises to the cytoplasm. It catalyses the reaction CMP + ATP = CDP + ADP. The enzyme catalyses dCMP + ATP = dCDP + ADP. In Rhodopseudomonas palustris (strain BisB5), this protein is Cytidylate kinase.